Here is a 927-residue protein sequence, read N- to C-terminus: MDYKQTLNLPDTQFPMRGNLPKREPEILEKWQSMGLYEKMEEAGRTRPNFTLHDGPPYANGHIHIGHALNKILKDIVLKSRRMKGFYAPYVPGWDCHGLPIELMVDKKLGKKKRDMTKVEIRKECRVYADQWVKIQSEEFERLGVMGEWDRPYLTMTHHYEAVTARELARFVEKGGLFKGKKPIHWCSSCVTALAEAEVEYADHKSPSIYVKFPFDGELPAELNDLAGRKLSFVIWTTTPWTIPANLAVCLNPNLPYAVVETGDELLVMAEGLVSGVMQELGLENYRVLKTFEAPIFERKTCRHPFYDRPSLLILGDHVTLEAGTGCVHTAPGHGQDDYVVGLAYGLDVYNPVDNYGRYYEDVEFFGGMKINQANGAVNAKLTEVGALLKESEVSHSYPHCWRCKKPIIFRATEQWFISMEANGLREKALGHINDVNWVPRWGRDRIYNMVENRPDWCISRQRSWGVPITIFYCAKCGEALEDSKVMDYVADLFEEGGSDLWFDKPAKELMPAGTTCPGCGHDEFTKETDILDVWFDSGVSHAAVLDNRDYLSWPADLYLEGSDQHRGWFHSSLLASVGTRELTPYKSVLTHGFVVDGKGKKMSKSVGNVVAPEEVIKKYGAEILRLWVAAQDYRDDIRISNEILQRLSDAYRRIRNTARYILGNLSGFDPSRDMVADDQLLELDRWALAKLEDLAGRVEKAYEDYEFHIIYHAVHNFCSVEMSSFYLDVLKDRLYVSGTDSIARRSAQTAMYRILDCITRLIAPVLSFTAEEIWAFMPGERSESVHLGEFVQFPTSFRDAALEERYDNLLEIRSDVSKALELARNEKVIGHSLDARVLLSAPAGATLELLEKYRDQLASLFIVSQVELVDDLADGLTGENLPDLKVKVEKALGEKCERCWNYATSVGDSAEHPALCHRCVAVLTDR.

A 'HIGH' region motif is present at residues 57 to 67 (PYANGHIHIGH). Residue Glu561 coordinates L-isoleucyl-5'-AMP. A 'KMSKS' region motif is present at residues 602–606 (KMSKS). Lys605 is an ATP binding site. 4 residues coordinate Zn(2+): Cys897, Cys900, Cys917, and Cys920.

Belongs to the class-I aminoacyl-tRNA synthetase family. IleS type 1 subfamily. As to quaternary structure, monomer. The cofactor is Zn(2+).

The protein resides in the cytoplasm. It catalyses the reaction tRNA(Ile) + L-isoleucine + ATP = L-isoleucyl-tRNA(Ile) + AMP + diphosphate. Catalyzes the attachment of isoleucine to tRNA(Ile). As IleRS can inadvertently accommodate and process structurally similar amino acids such as valine, to avoid such errors it has two additional distinct tRNA(Ile)-dependent editing activities. One activity is designated as 'pretransfer' editing and involves the hydrolysis of activated Val-AMP. The other activity is designated 'posttransfer' editing and involves deacylation of mischarged Val-tRNA(Ile). The protein is Isoleucine--tRNA ligase of Syntrophotalea carbinolica (strain DSM 2380 / NBRC 103641 / GraBd1) (Pelobacter carbinolicus).